A 400-amino-acid chain; its full sequence is Enoyl-[acyl-carrier-protein] reductase [NADH] (400 aa).

NAD(+)-binding positions include 48-53 (GASTGY), 74-75 (FE), 111-112 (DA), and 139-140 (LA). Position 225 (Tyr-225) interacts with substrate. Residue Tyr-235 is the Proton donor of the active site. NAD(+)-binding positions include Lys-244 and 273–275 (VVT).

Belongs to the TER reductase family. As to quaternary structure, monomer.

It carries out the reaction a 2,3-saturated acyl-[ACP] + NAD(+) = a (2E)-enoyl-[ACP] + NADH + H(+). It functions in the pathway lipid metabolism; fatty acid biosynthesis. Involved in the final reduction of the elongation cycle of fatty acid synthesis (FAS II). Catalyzes the reduction of a carbon-carbon double bond in an enoyl moiety that is covalently linked to an acyl carrier protein (ACP). This is Enoyl-[acyl-carrier-protein] reductase [NADH] from Burkholderia multivorans (strain ATCC 17616 / 249).